The primary structure comprises 607 residues: Arginine decarboxylase (607 aa).

At lysine 104 the chain carries N6-(pyridoxal phosphate)lysine. 290–300 (LDCGGGLGVDY) is a substrate binding site.

The protein belongs to the Orn/Lys/Arg decarboxylase class-II family. SpeA subfamily. The cofactor is pyridoxal 5'-phosphate. Mg(2+) serves as cofactor.

It catalyses the reaction L-arginine + H(+) = agmatine + CO2. The protein operates within amine and polyamine biosynthesis; agmatine biosynthesis; agmatine from L-arginine: step 1/1. The sequence is that of Arginine decarboxylase (SPE1) from Avena sativa (Oat).